Consider the following 274-residue polypeptide: NADPH-dependent 7-cyano-7-deazaguanine reductase (274 aa).

80-82 (VES) is a binding site for substrate. NADPH is bound at residue 82–83 (SK). The Thioimide intermediate role is filled by cysteine 181. Aspartate 188 (proton donor) is an active-site residue. 220-221 (HE) provides a ligand contact to substrate. Residue 249–250 (RG) participates in NADPH binding.

Belongs to the GTP cyclohydrolase I family. QueF type 2 subfamily. In terms of assembly, homodimer.

Its subcellular location is the cytoplasm. It catalyses the reaction 7-aminomethyl-7-carbaguanine + 2 NADP(+) = 7-cyano-7-deazaguanine + 2 NADPH + 3 H(+). The protein operates within tRNA modification; tRNA-queuosine biosynthesis. Its function is as follows. Catalyzes the NADPH-dependent reduction of 7-cyano-7-deazaguanine (preQ0) to 7-aminomethyl-7-deazaguanine (preQ1). This chain is NADPH-dependent 7-cyano-7-deazaguanine reductase, found in Burkholderia pseudomallei (strain 1710b).